The following is a 338-amino-acid chain: 4-hydroxythreonine-4-phosphate dehydrogenase (338 aa).

Substrate-binding residues include His136 and Thr137. A divalent metal cation contacts are provided by His173, His218, and His273. Residues Lys281, Asn290, and Arg299 each contribute to the substrate site.

This sequence belongs to the PdxA family. As to quaternary structure, homodimer. It depends on Zn(2+) as a cofactor. Requires Mg(2+) as cofactor. Co(2+) serves as cofactor.

The protein localises to the cytoplasm. The enzyme catalyses 4-(phosphooxy)-L-threonine + NAD(+) = 3-amino-2-oxopropyl phosphate + CO2 + NADH. The protein operates within cofactor biosynthesis; pyridoxine 5'-phosphate biosynthesis; pyridoxine 5'-phosphate from D-erythrose 4-phosphate: step 4/5. Catalyzes the NAD(P)-dependent oxidation of 4-(phosphooxy)-L-threonine (HTP) into 2-amino-3-oxo-4-(phosphooxy)butyric acid which spontaneously decarboxylates to form 3-amino-2-oxopropyl phosphate (AHAP). The protein is 4-hydroxythreonine-4-phosphate dehydrogenase of Ralstonia nicotianae (strain ATCC BAA-1114 / GMI1000) (Ralstonia solanacearum).